The chain runs to 154 residues: Ribonuclease H (154 aa).

Positions 1 to 142 (MLKHIDLYTD…CDELARDAAS (142 aa)) constitute an RNase H type-1 domain. Residues Asp-10, Glu-48, Asp-70, and Asp-134 each coordinate Mg(2+). Residues 126–147 (GHPENERCDELARDAASGKELA) are compositionally biased toward basic and acidic residues. The disordered stretch occupies residues 126–154 (GHPENERCDELARDAASGKELAEDTGYQP).

The protein belongs to the RNase H family. As to quaternary structure, monomer. Mg(2+) serves as cofactor.

It is found in the cytoplasm. The enzyme catalyses Endonucleolytic cleavage to 5'-phosphomonoester.. Endonuclease that specifically degrades the RNA of RNA-DNA hybrids. The polypeptide is Ribonuclease H (Aeromonas salmonicida (strain A449)).